The chain runs to 112 residues: Protein F-112 (112 aa).

Its function is as follows. Essential for virus function. This is Protein F-112 from Saccharolobus solfataricus (Sulfolobus solfataricus).